We begin with the raw amino-acid sequence, 204 residues long: Glycerol-3-phosphate acyltransferase (204 aa).

The next 5 helical transmembrane spans lie at 8–28 (ILIFAYLLGSINSAIIVCYIF), 53–73 (VPAAITLIFDILKGLVPVVIA), 81–101 (FITACTALYAILGHIFPIFFG), 116–136 (FGFSWILGLIFVITWLCVAII), and 155–175 (VIFTSDLQVAAPFLIIAIIIL).

This sequence belongs to the PlsY family. In terms of assembly, probably interacts with PlsX.

Its subcellular location is the cell inner membrane. It carries out the reaction an acyl phosphate + sn-glycerol 3-phosphate = a 1-acyl-sn-glycero-3-phosphate + phosphate. Its pathway is lipid metabolism; phospholipid metabolism. Catalyzes the transfer of an acyl group from acyl-phosphate (acyl-PO(4)) to glycerol-3-phosphate (G3P) to form lysophosphatidic acid (LPA). This enzyme utilizes acyl-phosphate as fatty acyl donor, but not acyl-CoA or acyl-ACP. The polypeptide is Glycerol-3-phosphate acyltransferase (Francisella tularensis subsp. novicida (strain U112)).